The sequence spans 156 residues: Small ribosomal subunit protein uS7 (156 aa).

It belongs to the universal ribosomal protein uS7 family. Part of the 30S ribosomal subunit. Contacts proteins S9 and S11.

One of the primary rRNA binding proteins, it binds directly to 16S rRNA where it nucleates assembly of the head domain of the 30S subunit. Is located at the subunit interface close to the decoding center, probably blocks exit of the E-site tRNA. This chain is Small ribosomal subunit protein uS7, found in Phytoplasma mali (strain AT).